The primary structure comprises 847 residues: Bifunctional protein argC, mitochondrial (847 aa).

The tract at residues 100 to 331 is acetylglutamate kinase; sequence QIVLVKIGGG…PPSTSITITS (232 aa). The N-acetyltransferase domain occupies 352-508; that stretch reads GEVMHSHESP…CLSQSSTYLS (157 aa). An N-acetyl-gamma-glutamyl-phosphate reductase region spans residues 531–846; the sequence is FRVGLIGARG…LDELASIKNE (316 aa). The active site involves C665.

This sequence in the N-terminal section; belongs to the acetylglutamate kinase family. The protein in the C-terminal section; belongs to the NAGSA dehydrogenase family.

The protein localises to the mitochondrion. It catalyses the reaction N-acetyl-L-glutamate 5-semialdehyde + phosphate + NADP(+) = N-acetyl-L-glutamyl 5-phosphate + NADPH + H(+). The enzyme catalyses N-acetyl-L-glutamate + ATP = N-acetyl-L-glutamyl 5-phosphate + ADP. It participates in amino-acid biosynthesis; L-arginine biosynthesis; N(2)-acetyl-L-ornithine from L-glutamate: step 2/4. It functions in the pathway amino-acid biosynthesis; L-arginine biosynthesis; N(2)-acetyl-L-ornithine from L-glutamate: step 3/4. In Dictyostelium discoideum (Social amoeba), this protein is Bifunctional protein argC, mitochondrial (argC).